The primary structure comprises 351 residues: Ion-translocating oxidoreductase complex subunit D (351 aa).

A run of 4 helical transmembrane segments spans residues 18-38 (IMLLVILACIPGIIAQTYFFG), 40-60 (GSLIQVMLAMITALLAEGAVL), 87-107 (LPPLAPWWMIVLGTLFAIVIA), and 121-141 (PAMVGYVVLLISFPVQMTSWL). Position 185 is an FMN phosphoryl threonine (Thr-185). A run of 5 helical transmembrane segments spans residues 211-231 (VLAGLGWQWVNTGFLVGGLLL), 241-261 (IPVSFLLALGGCAAVSWMIAP), 264-284 (FASPMLHLFSGATMLGAFFIA), 298-318 (LIFGALIGILVWLIRVYGGYP), and 321-341 (VAFAVLLANITVPLIDHYTQP).

The protein belongs to the NqrB/RnfD family. As to quaternary structure, the complex is composed of six subunits: RnfA, RnfB, RnfC, RnfD, RnfE and RnfG. It depends on FMN as a cofactor.

It localises to the cell inner membrane. In terms of biological role, part of a membrane-bound complex that couples electron transfer with translocation of ions across the membrane. The polypeptide is Ion-translocating oxidoreductase complex subunit D (Yersinia pestis).